The following is a 259-amino-acid chain: 5'-nucleotidase SurE (259 aa).

Positions 8, 9, 40, and 92 each coordinate a divalent metal cation.

Belongs to the SurE nucleotidase family. A divalent metal cation is required as a cofactor.

It is found in the cytoplasm. The catalysed reaction is a ribonucleoside 5'-phosphate + H2O = a ribonucleoside + phosphate. Functionally, nucleotidase that shows phosphatase activity on nucleoside 5'-monophosphates. The protein is 5'-nucleotidase SurE of Stenotrophomonas maltophilia (strain K279a).